The sequence spans 92 residues: Bombyxin A-1 (92 aa).

The first 19 residues, 1–19, serve as a signal peptide directing secretion; the sequence is MKILLAIALMLSTVMWVST. The residue at position 20 (Gln20) is a Pyrrolidone carboxylic acid. 3 disulfide bridges follow: Cys29-Cys79, Cys41-Cys92, and Cys78-Cys83. A propeptide spans 50–70 (c peptide like); sequence SGAQFASYGSAWLMPYSEGRG.

It belongs to the insulin family. As to quaternary structure, heterodimer of a B chain and an A chain linked by two disulfide bonds.

It localises to the secreted. Functionally, brain peptide responsible for activation of prothoracic glands to produce ecdysone in insects. This chain is Bombyxin A-1 (BBXA1), found in Bombyx mori (Silk moth).